A 388-amino-acid chain; its full sequence is Chorismate synthase (388 aa).

Arginine 39 and arginine 45 together coordinate NADP(+). FMN-binding positions include 130–132 (RSS), 251–252 (NA), glycine 296, 311–315 (KPIPT), and arginine 337.

The protein belongs to the chorismate synthase family. As to quaternary structure, homotetramer. FMNH2 is required as a cofactor.

It carries out the reaction 5-O-(1-carboxyvinyl)-3-phosphoshikimate = chorismate + phosphate. It participates in metabolic intermediate biosynthesis; chorismate biosynthesis; chorismate from D-erythrose 4-phosphate and phosphoenolpyruvate: step 7/7. Functionally, catalyzes the anti-1,4-elimination of the C-3 phosphate and the C-6 proR hydrogen from 5-enolpyruvylshikimate-3-phosphate (EPSP) to yield chorismate, which is the branch point compound that serves as the starting substrate for the three terminal pathways of aromatic amino acid biosynthesis. This reaction introduces a second double bond into the aromatic ring system. The protein is Chorismate synthase of Streptococcus pyogenes serotype M12 (strain MGAS2096).